We begin with the raw amino-acid sequence, 141 residues long: Sperm-associated microtubule inner protein 10 (141 aa).

The span at 1 to 16 (MASEKDDGPALPKLDD) shows a compositional bias: basic and acidic residues. The disordered stretch occupies residues 1–33 (MASEKDDGPALPKLDDDNQTAENTCKPAEEQPQ).

Microtubule inner protein component of sperm flagellar doublet microtubules. As to expression, expressed predominantly in the testis.

The protein localises to the cytoplasm. It localises to the cytoskeleton. It is found in the flagellum axoneme. Its function is as follows. Microtubule inner protein (MIP) part of the dynein-decorated doublet microtubules (DMTs) in flagellum axoneme, which is required for flagellum beating. May serve to reinforce and thus stabilize the microtubule structure in the sperm flagella. Involved in the regulation of sperm motility. This Mus musculus (Mouse) protein is Sperm-associated microtubule inner protein 10 (Spmip10).